The following is a 353-amino-acid chain: Peptide methionine sulfoxide reductase MsrA/MsrB (353 aa).

A peptide methionine sulfoxide reductase A region spans residues 43–196 (REIYLAGGCF…PNGYCHIDIT (154 aa)). The active site involves Cys-51. A MsrB domain is found at 213-336 (DAELKAKLTP…NSASIKFIPL (124 aa)). Cys-325 (nucleophile) is an active-site residue.

It in the N-terminal section; belongs to the MsrA Met sulfoxide reductase family. The protein in the C-terminal section; belongs to the MsrB Met sulfoxide reductase family.

The catalysed reaction is L-methionyl-[protein] + [thioredoxin]-disulfide + H2O = L-methionyl-(S)-S-oxide-[protein] + [thioredoxin]-dithiol. It carries out the reaction [thioredoxin]-disulfide + L-methionine + H2O = L-methionine (S)-S-oxide + [thioredoxin]-dithiol. The enzyme catalyses L-methionyl-[protein] + [thioredoxin]-disulfide + H2O = L-methionyl-(R)-S-oxide-[protein] + [thioredoxin]-dithiol. Functionally, has an important function as a repair enzyme for proteins that have been inactivated by oxidation. Catalyzes the reversible oxidation-reduction of methionine sulfoxide in proteins to methionine. The protein is Peptide methionine sulfoxide reductase MsrA/MsrB (msrAB) of Haemophilus influenzae (strain ATCC 51907 / DSM 11121 / KW20 / Rd).